Reading from the N-terminus, the 91-residue chain is Probable Fe(2+)-trafficking protein (91 aa).

It belongs to the Fe(2+)-trafficking protein family.

Its function is as follows. Could be a mediator in iron transactions between iron acquisition and iron-requiring processes, such as synthesis and/or repair of Fe-S clusters in biosynthetic enzymes. This Shewanella amazonensis (strain ATCC BAA-1098 / SB2B) protein is Probable Fe(2+)-trafficking protein.